Here is a 382-residue protein sequence, read N- to C-terminus: 3-ketosteroid-9-alpha-monooxygenase, oxygenase component (382 aa).

Positions 20–122 constitute a Rieske domain; sequence WHCLGLSRTF…TMEKHGQLFV (103 aa). Cys61, His63, Cys80, and His83 together coordinate [2Fe-2S] cluster. Fe cation is bound by residues Asn169, His175, His180, and Asp298.

Homotrimer. The two-component system 3-ketosteroid-9-alpha-monooxygenase is composed of an oxygenase component KshA and a reductase component KshB. [2Fe-2S] cluster serves as cofactor. The cofactor is Fe cation.

The enzyme catalyses androsta-1,4-diene-3,17-dione + 2 reduced [2Fe-2S]-[ferredoxin] + O2 + 2 H(+) = 9alpha-hydroxyandrosta-1,4-diene-3,17-dione + 2 oxidized [2Fe-2S]-[ferredoxin] + H2O. Its function is as follows. In vitro, catalyzes the introduction of a 9alpha-hydroxyl moiety into the ring B of 3-ketosteroid substrates such as 1,4-androstadiene-3,17-dione (ADD), 4-androstene-3,17-dione (AD), 4-androstene-17beta-ol-3-one (testosterone), 4-pregnene-3,20-dione (progesterone), 23,24-bisnorcholesta-4-ene-22-oate and 23,24-bisnorcholesta-1,4-diene-22-oate. This Rhodococcus rhodochrous protein is 3-ketosteroid-9-alpha-monooxygenase, oxygenase component.